Reading from the N-terminus, the 174-residue chain is Nucleoside-triphosphatase THEP1 (174 aa).

ATP contacts are provided by residues 15-22 (GMPGVGKT) and 102-109 (LAIVDEIG).

This sequence belongs to the THEP1 NTPase family.

It carries out the reaction a ribonucleoside 5'-triphosphate + H2O = a ribonucleoside 5'-diphosphate + phosphate + H(+). Has nucleotide phosphatase activity towards ATP, GTP, CTP, TTP and UTP. May hydrolyze nucleoside diphosphates with lower efficiency. The chain is Nucleoside-triphosphatase THEP1 from Pyrobaculum islandicum (strain DSM 4184 / JCM 9189 / GEO3).